A 328-amino-acid polypeptide reads, in one-letter code: m7GpppN-mRNA hydrolase NUDT17 (328 aa).

Positions 90 to 236 constitute a Nudix hydrolase domain; sequence GVDLGVAVIL…DGTETPGLLP (147 aa). The Nudix box motif lies at 127–148; the sequence is GHVELEEELLDGGLRELWEESG. Residues E142 and E146 each coordinate Mg(2+). The interval 299-328 is disordered; the sequence is PCKSAAYLDPGPAKEEWNMDPLPPNQGSGK.

This sequence belongs to the Nudix hydrolase family. It depends on Mg(2+) as a cofactor. Mn(2+) is required as a cofactor.

The enzyme catalyses a 5'-end (N(7)-methyl 5'-triphosphoguanosine)-ribonucleoside in mRNA + H2O = N(7)-methyl-GDP + a 5'-end phospho-ribonucleoside in mRNA + 2 H(+). Acts as a decapping enzyme capable of hydrolyzing monomethylated capped RNAs (in vitro). Hydrolyzes monomethylated capped RNA after alpha and beta phosphates to form N(7)-methyl-GDP. Shows low activity towards unmethylated capped RNA. The sequence is that of m7GpppN-mRNA hydrolase NUDT17 (NUDT17) from Homo sapiens (Human).